Here is a 128-residue protein sequence, read N- to C-terminus: Large ribosomal subunit protein bL17 (128 aa).

It belongs to the bacterial ribosomal protein bL17 family. In terms of assembly, part of the 50S ribosomal subunit. Contacts protein L32.

This Streptococcus equi subsp. equi (strain 4047) protein is Large ribosomal subunit protein bL17.